Here is a 421-residue protein sequence, read N- to C-terminus: 4-hydroxy-3-methylbut-2-en-1-yl diphosphate synthase (flavodoxin) (421 aa).

Cys311, Cys314, Cys357, and Glu364 together coordinate [4Fe-4S] cluster.

It belongs to the IspG family. Requires [4Fe-4S] cluster as cofactor.

It catalyses the reaction (2E)-4-hydroxy-3-methylbut-2-enyl diphosphate + oxidized [flavodoxin] + H2O + 2 H(+) = 2-C-methyl-D-erythritol 2,4-cyclic diphosphate + reduced [flavodoxin]. The protein operates within isoprenoid biosynthesis; isopentenyl diphosphate biosynthesis via DXP pathway; isopentenyl diphosphate from 1-deoxy-D-xylulose 5-phosphate: step 5/6. Converts 2C-methyl-D-erythritol 2,4-cyclodiphosphate (ME-2,4cPP) into 1-hydroxy-2-methyl-2-(E)-butenyl 4-diphosphate. This Xanthomonas oryzae pv. oryzae (strain KACC10331 / KXO85) protein is 4-hydroxy-3-methylbut-2-en-1-yl diphosphate synthase (flavodoxin).